Consider the following 231-residue polypeptide: 7-cyano-7-deazaguanine synthase (231 aa).

8–18 is an ATP binding site; that stretch reads FSGGQDSTTCL. Residues cysteine 188, cysteine 197, cysteine 200, and cysteine 203 each contribute to the Zn(2+) site.

The protein belongs to the QueC family. Zn(2+) is required as a cofactor.

It carries out the reaction 7-carboxy-7-deazaguanine + NH4(+) + ATP = 7-cyano-7-deazaguanine + ADP + phosphate + H2O + H(+). It participates in purine metabolism; 7-cyano-7-deazaguanine biosynthesis. Catalyzes the ATP-dependent conversion of 7-carboxy-7-deazaguanine (CDG) to 7-cyano-7-deazaguanine (preQ(0)). The polypeptide is 7-cyano-7-deazaguanine synthase (Salmonella arizonae (strain ATCC BAA-731 / CDC346-86 / RSK2980)).